The chain runs to 125 residues: Fluoride-specific ion channel FluC (125 aa).

4 helical membrane passes run 1 to 21 (MFAT…ARYG), 34 to 54 (FPWA…FLFF), 72 to 92 (TGGL…LVLF), and 101 to 121 (LLYM…GAWI). Residues Gly76 and Thr79 each contribute to the Na(+) site.

The protein belongs to the fluoride channel Fluc/FEX (TC 1.A.43) family.

It localises to the cell inner membrane. It carries out the reaction fluoride(in) = fluoride(out). Its activity is regulated as follows. Na(+) is not transported, but it plays an essential structural role and its presence is essential for fluoride channel function. Its function is as follows. Fluoride-specific ion channel. Important for reducing fluoride concentration in the cell, thus reducing its toxicity. The polypeptide is Fluoride-specific ion channel FluC (Acidithiobacillus ferrooxidans (strain ATCC 23270 / DSM 14882 / CIP 104768 / NCIMB 8455) (Ferrobacillus ferrooxidans (strain ATCC 23270))).